The sequence spans 209 residues: Uracil phosphoribosyltransferase (209 aa).

5-phospho-alpha-D-ribose 1-diphosphate-binding positions include Arg-79, Arg-104, and 131 to 139; that span reads DPMLATGGS. Uracil is bound by residues Ile-194 and 199-201; that span reads GDA. Residue Asp-200 participates in 5-phospho-alpha-D-ribose 1-diphosphate binding.

The protein belongs to the UPRTase family. It depends on Mg(2+) as a cofactor.

It catalyses the reaction UMP + diphosphate = 5-phospho-alpha-D-ribose 1-diphosphate + uracil. The protein operates within pyrimidine metabolism; UMP biosynthesis via salvage pathway; UMP from uracil: step 1/1. Its activity is regulated as follows. Allosterically activated by GTP. Catalyzes the conversion of uracil and 5-phospho-alpha-D-ribose 1-diphosphate (PRPP) to UMP and diphosphate. This chain is Uracil phosphoribosyltransferase, found in Clostridium perfringens (strain SM101 / Type A).